Consider the following 686-residue polypeptide: Pentatricopeptide repeat-containing protein At4g08210 (686 aa).

PPR repeat units lie at residues 4–38 (DLKL…GISQ), 39–69 (NVFI…MSER), 70–104 (NIVT…EEEA), 106–140 (NEFM…NLRG), 141–171 (DVVL…ILRP), 172–206 (SSTS…NVVS), 207–236 (WNCL…GLVL), 237–271 (DGFA…GLES), 272–302 (SPFA…EKLA), 306–340 (SVAV…DLCF), 341–375 (DSYT…GYEL), 376–406 (DYIV…LPNK), 407–441 (DIIA…GLDA), 442–476 (DQFI…GYES), 477–507 (EPVT…MLER), 508–542 (DVVS…GIEP), 543–573 (NKVT…MKSE), and 579–609 (YLEH…MPLE). The type E motif; degenerate stretch occupies residues 614 to 686 (IWTSLLTACG…AKESGMSWII (73 aa)).

The protein belongs to the PPR family. PCMP-E subfamily.

This is Pentatricopeptide repeat-containing protein At4g08210 (PCMP-E100) from Arabidopsis thaliana (Mouse-ear cress).